Reading from the N-terminus, the 276-residue chain is Diaminopimelate epimerase (276 aa).

Asparagine 13, glutamine 46, and asparagine 66 together coordinate substrate. The active-site Proton donor is the cysteine 75. Residues 76–77, asparagine 159, asparagine 192, and 210–211 contribute to the substrate site; these read GN and ER. The active-site Proton acceptor is the cysteine 219. 220–221 serves as a coordination point for substrate; the sequence is GT.

The protein belongs to the diaminopimelate epimerase family. Homodimer.

Its subcellular location is the cytoplasm. It catalyses the reaction (2S,6S)-2,6-diaminopimelate = meso-2,6-diaminopimelate. It participates in amino-acid biosynthesis; L-lysine biosynthesis via DAP pathway; DL-2,6-diaminopimelate from LL-2,6-diaminopimelate: step 1/1. Functionally, catalyzes the stereoinversion of LL-2,6-diaminopimelate (L,L-DAP) to meso-diaminopimelate (meso-DAP), a precursor of L-lysine and an essential component of the bacterial peptidoglycan. The protein is Diaminopimelate epimerase of Pseudoalteromonas translucida (strain TAC 125).